The primary structure comprises 217 residues: Pyrophosphatase PpaX (217 aa).

The active-site Nucleophile is the Asp-11.

The protein belongs to the HAD-like hydrolase superfamily. PpaX family. Requires Mg(2+) as cofactor.

The enzyme catalyses diphosphate + H2O = 2 phosphate + H(+). In terms of biological role, hydrolyzes pyrophosphate formed during P-Ser-HPr dephosphorylation by HPrK/P. Might play a role in controlling the intracellular pyrophosphate pool. The protein is Pyrophosphatase PpaX of Listeria monocytogenes serotype 4b (strain CLIP80459).